A 397-amino-acid chain; its full sequence is Putative efflux system protein YvrP (397 aa).

Residues 8–28 traverse the membrane as a helical segment; the sequence is LIGGAICAGVLVLAGIGAGGF. A coiled-coil region spans residues 106–183; it reads EDHSDEVEQA…KELAGLTKNK (78 aa).

It belongs to the membrane fusion protein (MFP) (TC 8.A.1) family.

It is found in the cell membrane. This is Putative efflux system protein YvrP (yvrP) from Bacillus subtilis (strain 168).